We begin with the raw amino-acid sequence, 369 residues long: Immunoglobulin superfamily member 5 (369 aa).

The signal sequence occupies residues 1–24 (MEGSWRDVLAVLVILAQLTVSGSS). 2 consecutive Ig-like V-type domains span residues 25–125 (YQII…LSVQ) and 128–217 (GTLN…LTVN). Over 25–239 (YQIIEGPRNV…GEGQALPTWA (215 aa)) the chain is Extracellular. N-linked (GlcNAc...) asparagine glycosylation is found at Asn-33 and Asn-45. Cysteines 46 and 109 form a disulfide. N-linked (GlcNAc...) asparagine glycosylation is found at Asn-146, Asn-196, and Asn-217. Cysteines 149 and 201 form a disulfide. The chain crosses the membrane as a helical span at residues 240–260 (IILLAVAFSLLLILIIALIII). Residues 261–369 (FCCCCVSRRE…PQKIRNVTIV (109 aa)) lie on the Cytoplasmic side of the membrane. A disordered region spans residues 321–354 (PKSGEVSLPEQRSSLPQQELDKHRPSPVTHPRVS).

The protein belongs to the immunoglobulin superfamily. In terms of assembly, interacts with MAGI1 at tight junctions, forms a tripartite complex with NPHS1. Interacts with LNX1 isoform 2 via its PDZ 2 domain, it may also interact with other isoforms containing this domain. As to expression, in kidney, it is found in glomeruli and in the proximal tubules (at protein level).

It is found in the apical cell membrane. The protein localises to the cell junction. The protein resides in the tight junction. Functionally, provides, together with MAGI1, an adhesion machinery at tight junctions, which may regulate the permeability of kidney glomerulus and small intestinal epithelial cells. Mediates calcium-independent homophilic cell adhesion. In testis, it may function as a cell adhesion molecule rather than a tight-junction protein. It may participate in the adhesion between spermatogonia-spermatogonia, spermatogonia-Sertoli cells, and Sertoli cells-Sertoli cells. The protein is Immunoglobulin superfamily member 5 (Igsf5) of Rattus norvegicus (Rat).